We begin with the raw amino-acid sequence, 692 residues long: Elongation factor G (692 aa).

One can recognise a tr-type G domain in the interval 8–282; the sequence is ENTRNIGIMA…AVIDYLPSPL (275 aa). GTP contacts are provided by residues 17 to 24, 81 to 85, and 135 to 138; these read AHIDAGKT, DTPGH, and NKMD.

This sequence belongs to the TRAFAC class translation factor GTPase superfamily. Classic translation factor GTPase family. EF-G/EF-2 subfamily.

Its subcellular location is the cytoplasm. Its function is as follows. Catalyzes the GTP-dependent ribosomal translocation step during translation elongation. During this step, the ribosome changes from the pre-translocational (PRE) to the post-translocational (POST) state as the newly formed A-site-bound peptidyl-tRNA and P-site-bound deacylated tRNA move to the P and E sites, respectively. Catalyzes the coordinated movement of the two tRNA molecules, the mRNA and conformational changes in the ribosome. This Bacillus cereus (strain AH820) protein is Elongation factor G.